We begin with the raw amino-acid sequence, 798 residues long: Cation channel sperm-associated auxiliary subunit delta (798 aa).

The signal sequence occupies residues 1–20 (MLMLMLVAAVTMWLRPLVTA). The Extracellular portion of the chain corresponds to 21 to 723 (QLCRSRTVRT…AFPVQLVSAG (703 aa)). Disulfide bonds link Cys23-Cys369, Cys59-Cys145, Cys144-Cys152, Cys387-Cys496, Cys510-Cys701, Cys525-Cys572, and Cys624-Cys652. A glycan (N-linked (GlcNAc...) asparagine) is linked at Asn123. N-linked (GlcNAc...) asparagine glycans are attached at residues Asn230, Asn240, Asn472, Asn538, and Asn630. Residues 724–745 (VVILLIISSILGSVWLAYKTPK) form a helical membrane-spanning segment. Over 746–798 (LLRTARGRRIKKCATQLCRRCKTVCQFRASATARAGTEPPGRHRTPHGGRSDH) the chain is Cytoplasmic.

It belongs to the CATSPERD family. Component of the CatSper complex or CatSpermasome composed of the core pore-forming members CATSPER1, CATSPER2, CATSPER3 and CATSPER4 as well as auxiliary members CATSPERB, CATSPERG, CATSPERD, CATSPERE, CATSPERZ, C2CD6/CATSPERT, TMEM249, TMEM262 and EFCAB9. HSPA1 may be an additional auxiliary complex member. The core complex members CATSPER1, CATSPER2, CATSPER3 and CATSPER4 form a heterotetrameric channel. The auxiliary CATSPERB, CATSPERG, CATSPERD and CATSPERE subunits form a pavilion-like structure over the pore which stabilizes the complex through interactions with CATSPER4, CATSPER3, CATSPER1 and CATSPER2 respectively. TMEM262/CATSPERH interacts with CATSPERB, further stabilizing the complex. C2CD6/CATSPERT interacts at least with CATSPERD and is required for targeting the CatSper complex in the flagellar membrane.

It is found in the cell projection. The protein localises to the cilium. The protein resides in the flagellum membrane. Its function is as follows. Auxiliary component of the CatSper complex, a complex involved in sperm cell hyperactivation. Sperm cell hyperactivation is needed for sperm motility which is essential late in the preparation of sperm for fertilization. Required for CATSPER1 stability before intraflagellar transport and/or incorporation of the CatSper complex channel into the flagellar membrane. The polypeptide is Cation channel sperm-associated auxiliary subunit delta (Homo sapiens (Human)).